Here is a 124-residue protein sequence, read N- to C-terminus: UPF0102 protein Haur_0145 (124 aa).

This sequence belongs to the UPF0102 family.

The sequence is that of UPF0102 protein Haur_0145 from Herpetosiphon aurantiacus (strain ATCC 23779 / DSM 785 / 114-95).